The sequence spans 106 residues: ATP-dependent Clp protease adapter protein ClpS (106 aa).

The span at 1–10 (MSQKTVHDQD) shows a compositional bias: basic and acidic residues. The interval 1–22 (MSQKTVHDQDNALLLETGNTKV) is disordered.

This sequence belongs to the ClpS family. As to quaternary structure, binds to the N-terminal domain of the chaperone ClpA.

In terms of biological role, involved in the modulation of the specificity of the ClpAP-mediated ATP-dependent protein degradation. The chain is ATP-dependent Clp protease adapter protein ClpS from Xylella fastidiosa (strain 9a5c).